A 707-amino-acid polypeptide reads, in one-letter code: Nucleolin (707 aa).

The tract at residues 1–308 (MVKLAKAGKT…KVEGSEPTTP (308 aa)) is disordered. An N6-acetyllysine mark is found at lysine 9, lysine 15, and lysine 16. The span at 24–46 (VEEDSEDEEMSEDEDDSSGEEEV) shows a compositional bias: acidic residues. Phosphoserine occurs at positions 28, 34, 40, and 41. Positions 56-92 (ATTTPAKKVVVSQTKKAAVPTPAKKAAVTPGKKAVAT) are enriched in low complexity. Residues 58–65 (TTPAKKVV) form repeat 1. The interval 58-135 (TTPAKKVVVS…GAATPAKGAK (78 aa)) is 8 X 8 AA tandem repeats of X-T-P-X-K-K-X-X. A Phosphoserine modification is found at serine 67. 4 positions are modified to phosphothreonine: threonine 69, threonine 76, threonine 84, and threonine 92. Repeat copies occupy residues 75-82 (PTPAKKAA), 83-90 (VTPGKKAV), and 91-98 (ATPAKKNI). Lysine 96 is modified (N6-acetyllysine). At threonine 99 the chain carries Phosphothreonine. The stretch at 99 to 104 (TPAKVI) is one 5; truncated repeat. Position 102 is an N6-acetyllysine (lysine 102). The stretch at 105-112 (PTPGKKGA) is repeat 6. Phosphothreonine is present on threonine 106. N6-acetyllysine occurs at positions 109 and 116. 2 repeat units span residues 120-127 (PTPGKKGA) and 128-135 (ATPAKGAK). Position 121 is a phosphothreonine (threonine 121). Positions 121–137 (TPGKKGAATPAKGAKNG) are enriched in low complexity. Lysine 124 bears the N6-acetyllysine mark. Phosphoserine occurs at positions 145 and 157. Over residues 145–170 (SDEDEDEEDEDDSDEDEDDEEEDEFE) the composition is skewed to acidic residues. Low complexity predominate over residues 179–188 (PAKAAPAAPA). Phosphoserine occurs at positions 189 and 212. The span at 189-217 (SEDEEDDEDEDDEEDDDEEEEDDSEEEVM) shows a compositional bias: acidic residues. Threonine 220 carries the post-translational modification Phosphothreonine. The span at 241-273 (EEEDDEEEDEDDEDEDDEEEDDEDDDEEEEEEE) shows a compositional bias: acidic residues. The segment covering 286–302 (MTKQKEAPEAKKQKVEG) has biased composition (basic and acidic residues). Lysine 299 participates in a covalent cross-link: Glycyl lysine isopeptide (Lys-Gly) (interchain with G-Cter in SUMO1); alternate. Lysine 299 is covalently cross-linked (Glycyl lysine isopeptide (Lys-Gly) (interchain with G-Cter in SUMO2); alternate). Serine 303 carries the post-translational modification Phosphoserine. 2 consecutive RRM domains span residues 309 to 385 (FNLF…KPKG) and 395 to 468 (RTLL…YTGE). Lysine 320 carries the N6-acetyllysine modification. Lysine 326 participates in a covalent cross-link: Glycyl lysine isopeptide (Lys-Gly) (interchain with G-Cter in SUMO1); alternate. Residue lysine 326 forms a Glycyl lysine isopeptide (Lys-Gly) (interchain with G-Cter in SUMO2); alternate linkage. Lysine 350 carries the N6-acetyllysine modification. Serine 358 is subject to Phosphoserine. Threonine 369 bears the Phosphothreonine mark. Lysine 372 is covalently cross-linked (Glycyl lysine isopeptide (Lys-Gly) (interchain with G-Cter in SUMO2)). A Glycyl lysine isopeptide (Lys-Gly) (interchain with G-Cter in SUMO2); alternate cross-link involves residue lysine 379. Lysine 379 carries the post-translational modification N6-acetyllysine; alternate. At lysine 400 the chain carries N6-acetyllysine. Residue serine 403 is modified to Phosphoserine. Threonine 407 is subject to Phosphothreonine. Lysine 429 and lysine 446 each carry N6-acetyllysine. Phosphoserine occurs at positions 460 and 462. N6-acetyllysine is present on residues lysine 469 and lysine 478. RRM domains lie at 487 to 561 (KTLV…LQGS) and 569 to 644 (KTLF…WAKP). Lysine 514 is covalently cross-linked (Glycyl lysine isopeptide (Lys-Gly) (interchain with G-Cter in SUMO2); alternate). N6-acetyllysine; alternate is present on lysine 514. 2 positions are modified to N6-acetyllysine: lysine 522 and lysine 569. Lysine 574 is covalently cross-linked (Glycyl lysine isopeptide (Lys-Gly) (interchain with G-Cter in SUMO2); alternate). At lysine 574 the chain carries N6-acetyllysine; alternate. Residue serine 577 is modified to Phosphoserine. A Glycyl lysine isopeptide (Lys-Gly) (interchain with G-Cter in SUMO1); alternate cross-link involves residue lysine 586. Lysine 586 participates in a covalent cross-link: Glycyl lysine isopeptide (Lys-Gly) (interchain with G-Cter in SUMO2); alternate. 2 positions are modified to phosphoserine: serine 588 and serine 616. Lysine 621 participates in a covalent cross-link: Glycyl lysine isopeptide (Lys-Gly) (interchain with G-Cter in SUMO2). Positions 639 to 707 (LDWAKPKGEG…KPQGKKTKFE (69 aa)) are disordered. Lysine 643 is subject to N6-acetyllysine. The span at 647–696 (EGGFGGRGGGRGGFGGRGGGRGGRGGFGGRGRGGFGGRGGFRGGRGGGGD) shows a compositional bias: gly residues. 9 positions are modified to asymmetric dimethylarginine: arginine 653, arginine 657, arginine 663, arginine 667, arginine 670, arginine 676, arginine 678, arginine 684, and arginine 688. Arginine 691 carries the asymmetric dimethylarginine; alternate modification. Arginine 691 is modified (omega-N-methylarginine; alternate).

Identified in a IGF2BP1-dependent mRNP granule complex containing untranslated mRNAs. Component of the SWAP complex that consists of NPM1, NCL/nucleolin, PARP1 and SWAP70. Component of a complex which is at least composed of HTATSF1/Tat-SF1, the P-TEFb complex components CDK9 and CCNT1, RNA polymerase II, SUPT5H, and NCL/nucleolin. Interacts with AICDA. Interacts with APTX. Interacts with C1QBP. Interacts with ERBB4. Interacts (via C-terminus) with FMR1 isoform 6 (via N-terminus). Interacts with GZF1; this interaction is important for nucleolar localization of GZF1. Interacts with NSUN2. Interacts with NVL. Interacts (via N-terminus domain) with SETX. Interacts (via RRM1 and C-terminal RRM4/Arg/Gly-rich domains) with TERT; the interaction is important for nucleolar localization of TERT. Interacts with WDR46. Interacts with ZFP36. Interacts with LRRC34. Interacts with RRP1B. Interacts with HNRNPU; this interaction occurs during mitosis. Interacts with RIOK1; RIOK1 recruits NCL to PRMT5 for symmetrically methylation. Interacts with ZBTB7B. Interacts with MDK; this interaction promotes NCL clustering and lateral movements of this complex into lipid rafts leading to MDK internalization. Interacts with HDGF. Interacts with ALKBH2. Interacts with IGFBP5; this interaction is necessary for IGFBP5 localization to the nucleus. Interacts with DDX24 (when ubiquitinated); this interaction may be important during ribosome biogenesis. Some glutamate residues are glycylated by TTLL8. This modification occurs exclusively on glutamate residues and results in a glycine chain on the gamma-carboxyl group. In terms of processing, symmetrically methylated by PRMT5. In terms of tissue distribution, expressed in B-cells that have been induced to switch to various Ig isotypes.

It localises to the nucleus. The protein localises to the nucleolus. Its subcellular location is the cytoplasm. Its function is as follows. Nucleolin is the major nucleolar protein of growing eukaryotic cells. It is found associated with intranucleolar chromatin and pre-ribosomal particles. It induces chromatin decondensation by binding to histone H1. It is thought to play a role in pre-rRNA transcription and ribosome assembly. May play a role in the process of transcriptional elongation. Binds RNA oligonucleotides with 5'-UUAGGG-3' repeats more tightly than the telomeric single-stranded DNA 5'-TTAGGG-3' repeats. This Mus musculus (Mouse) protein is Nucleolin (Ncl).